A 101-amino-acid chain; its full sequence is Small ubiquitin-related modifier 1 (101 aa).

Serine 2 carries the N-acetylserine modification. A Phosphoserine modification is found at serine 2. A Glycyl lysine isopeptide (Lys-Gly) (interchain with G-Cter in SUMO1); alternate cross-link involves residue lysine 7. Lysine 7 is covalently cross-linked (Glycyl lysine isopeptide (Lys-Gly) (interchain with G-Cter in SUMO2); alternate). At serine 9 the chain carries Phosphoserine. Residues lysine 16, lysine 17, and lysine 23 each participate in a glycyl lysine isopeptide (Lys-Gly) (interchain with G-Cter in SUMO2) cross-link. Residues 16-25 form a (Microbial infection) Interaction with Tula hantavirus region; that stretch reads KKEGEYIKLK. The 78-residue stretch at 20–97 folds into the Ubiquitin-like domain; sequence EYIKLKVIGQ…IEVYQEQTGG (78 aa). A Glycyl lysine isopeptide (Lys-Gly) (interchain with G-Cter in SUMO1) cross-link involves residue lysine 25. Phosphoserine is present on serine 32. Glycyl lysine isopeptide (Lys-Gly) (interchain with G-Cter in SUMO2) cross-links involve residues lysine 37, lysine 39, lysine 45, and lysine 46. Residues 37–40 are (Microbial infection) Interaction with Tula hantavirus; the sequence is KVKM. Glycine 97 participates in a covalent cross-link: Glycyl lysine isopeptide (Gly-Lys) (interchain with K-? in acceptor proteins). Positions 98-101 are excised as a propeptide; sequence HSTV.

The protein belongs to the ubiquitin family. SUMO subfamily. As to quaternary structure, covalently attached to KCNB1; UBE2I increases cross-linking with KCNB1 and PIAS1 decreases cross-links with KCNB1. Interacts with SAE2, RANBP2, PIAS1 and PIAS2. Interacts with PRKN. Covalently attached to a number of proteins such as IKFZ1, PML, RANGAP1, HIPK2, SP100, p53, p73-alpha, MDM2, JUN, DNMT3B and TDG. Also interacts with HIF1A, HIPK2, HIPK3, CHD3, EXOSC9, RAD51 and RAD52. Interacts with USP25 (via ts SIM domain); the interaction weakly sumoylates USP25. Interacts with SIMC1, CASP8AP2, RNF111 and SOBP (via SIM domains). Interacts with BHLHE40/DEC1. Interacts with RWDD3. Interacts with UBE2I/UBC9 and this interaction is enhanced in the presence of RWDD3. Interacts with MTA1. Interacts with SENP2. Interacts with HINT1. (Microbial infection) Interacts with Epstein-barr virus BGLF4. In terms of assembly, (Microbial infection) Interacts (via N-terminus) with Tula hantavirus nucleoprotein. As to quaternary structure, (Microbial infection) Interacts (via N-terminus) with Hantaan hantavirus nucleoprotein. In terms of processing, cleavage of precursor form by SENP1 or SENP2 is necessary for function. Post-translationally, polymeric SUMO1 chains undergo polyubiquitination by RNF4.

It localises to the nucleus membrane. It is found in the nucleus speckle. The protein localises to the cytoplasm. Its subcellular location is the nucleus. The protein resides in the PML body. It localises to the cell membrane. Functionally, ubiquitin-like protein that can be covalently attached to proteins as a monomer or a lysine-linked polymer. Covalent attachment via an isopeptide bond to its substrates requires prior activation by the E1 complex SAE1-SAE2 and linkage to the E2 enzyme UBE2I, and can be promoted by E3 ligases such as PIAS1-4, RANBP2 or CBX4. This post-translational modification on lysine residues of proteins plays a crucial role in a number of cellular processes such as nuclear transport, DNA replication and repair, mitosis and signal transduction. Involved for instance in targeting RANGAP1 to the nuclear pore complex protein RANBP2. Covalently attached to the voltage-gated potassium channel KCNB1; this modulates the gating characteristics of KCNB1. Polymeric SUMO1 chains are also susceptible to polyubiquitination which functions as a signal for proteasomal degradation of modified proteins. May also regulate a network of genes involved in palate development. Covalently attached to ZFHX3. The protein is Small ubiquitin-related modifier 1 (SUMO1) of Homo sapiens (Human).